Consider the following 239-residue polypeptide: Large ribosomal subunit protein uL1 (239 aa).

This sequence belongs to the universal ribosomal protein uL1 family. As to quaternary structure, part of the 50S ribosomal subunit.

Binds directly to 23S rRNA. The L1 stalk is quite mobile in the ribosome, and is involved in E site tRNA release. In terms of biological role, protein L1 is also a translational repressor protein, it controls the translation of the L11 operon by binding to its mRNA. The polypeptide is Large ribosomal subunit protein uL1 (Rickettsia canadensis (strain McKiel)).